A 261-amino-acid polypeptide reads, in one-letter code: Short-chain dehydrogenase/reductase ARMGADRAFT_1018421 (261 aa).

8 residues coordinate NADP(+): Ile-21, Asp-68, Asn-95, Lys-128, Tyr-161, Lys-165, Val-194, and Thr-196. Tyr-161 acts as the Proton acceptor in catalysis. The active-site Lowers pKa of active site Tyr is the Lys-165.

It belongs to the short-chain dehydrogenases/reductases (SDR) family.

Its pathway is secondary metabolite biosynthesis. In terms of biological role, short-chain dehydrogenase/reductase, part of the gene cluster that mediates the biosynthesis of melleolides, a range of antifungal and phytotoxic polyketide derivatives composed of an orsellinic acid (OA) moiety esterified to various sesquiterpene alcohols. The first step in melleolides biosynthesis is performed by the delta(6)-protoilludene synthase PRO1 which catalyzes the cyclization of farnesyl diphosphate to protoilludene. The orsellinic acid synthase armB produces OA by condensing acetyl-CoA with 3 malonyl-CoA units in a three-round chain elongation reaction folowed by a C2-C7 ring closure. ArmB further catalyzes the trans-esterification of OA to the various sesquiterpene alcohols resulting from the hydroxylation of protoilludene. The melleolides cluster also includes 5 cytochrome P450 monooxygenases, 4 NAD(+)-dependent oxidoreductases, one flavin-dependent oxidoreductase, and one O-methyltransferase. The cytochrome P450 monooxygenases may be involved in protoilludene hydroxylation to elaborate melleolides with multiple alcohol groups, such as melleolide D, which carries alcohol functionalities at C-4, C-5, C-10, and C-13. The role of the NAD(+)-dependent enzymes remains unknown. Numerous melleolides, including arnamial, show 5'-O-methylation of the aromatic moiety which may be catalyzed by the methyltransferase encoded in the cluster. The flavin-dependent oxidoreductase might represent the dehydrogenase yielding the aldehyde in position 1 of arnamial and other melleolides. Finally, several halogenase localized outside of the cluster, are able to catalyze the transfer of a single chlorine atom to the melleolide backbone, resulting in a 6'-chloromelleolide product. This Armillaria gallica (Bulbous honey fungus) protein is Short-chain dehydrogenase/reductase ARMGADRAFT_1018421.